The primary structure comprises 114 residues: Protein yippee-like (114 aa).

The Yippee domain occupies 14–111; it reads RTYSCVHCRA…IELAHMIKEN (98 aa). Residues C18, C21, C74, and C77 each contribute to the Zn(2+) site.

It belongs to the yippee family.

In terms of biological role, involved in regulating synaptic transmission in presynaptic neurons. In class IV dendritic arborization neurons (nociceptors), involved in regulating activation of their second-order neurons (SONs) and maintaining synaptic contact between nociceptors and their SONs. The polypeptide is Protein yippee-like (Drosophila melanogaster (Fruit fly)).